Reading from the N-terminus, the 576-residue chain is Vesicular glutamate transporter 1 (576 aa).

Over 1–63 (MEFRKEEFKK…CTCFGLPRRY (63 aa)) the chain is Cytoplasmic. A helical transmembrane segment spans residues 64-84 (IIAIMSGLGFCISFGIRCNLG). Residues 85-116 (VAIVSMVNNNTVYKGNKIVIEQAQFTWDPETV) are Vesicular-facing. Residue N93 is glycosylated (N-linked (GlcNAc...) asparagine). A helical membrane pass occupies residues 117–137 (GMIHGSFFWGYIVTQIPGGYI). At 138–140 (CQK) the chain is on the cytoplasmic side. The helical transmembrane segment at 141 to 161 (FAANRVFGFAIVATSTLNMLI) threads the bilayer. The Vesicular portion of the chain corresponds to 162–168 (PSAARVH). A helical transmembrane segment spans residues 169–189 (FACVICVRILQGLVEGVTYPA). At 190–208 (CHGIWSKWAPPLERSRLAT) the chain is on the cytoplasmic side. A helical transmembrane segment spans residues 209–229 (TAFCGSYAGAVVAMPLAGVLV). Over 230–236 (QYSGWSS) the chain is Vesicular. Residues 237–257 (VFYVYGSFGIMWYMFWILVSY) traverse the membrane as a helical segment. Residues 258–302 (ESPAIHPTISEEEKKYIEESIGESTGLMNPMAKFKAPWRKFFTSM) are Cytoplasmic-facing. A helical membrane pass occupies residues 303 to 323 (PVYAIIVANFCRSWTFYLLLI). At 324–341 (SQPAYFEEVFGFEISKVG) the chain is on the vesicular side. The helical transmembrane segment at 342-362 (LLSALPHLVMTIIVPIGGQIA) threads the bilayer. Residues 363 to 378 (DFLRTKRIMSTTNVRK) lie on the Cytoplasmic side of the membrane. The chain crosses the membrane as a helical span at residues 379-399 (MMNCGGFGMEATLLLVVGYSH). Topologically, residues 400–401 (SR) are vesicular. A helical transmembrane segment spans residues 402–422 (GVAISFLVLAVGFSGFAISGF). At 423-435 (NVNHLDIAPRYAS) the chain is on the cytoplasmic side. A helical transmembrane segment spans residues 436-456 (ILMGISNGVGTLSGMVCPLIV). Residues 457-469 (GAMTKHKTREEWQ) are Vesicular-facing. The helical transmembrane segment at 470-490 (YVFLIASLVHYGGVLFYGIFA) threads the bilayer. The Cytoplasmic portion of the chain corresponds to 491 to 576 (SGEKQPWAEP…YGTVAERDLS (86 aa)). The segment at 517 to 547 (ADESEEQSQAYGAYGSYGATQTTSQQNGGWT) is disordered. Over residues 534–545 (GATQTTSQQNGG) the composition is skewed to polar residues.

The protein belongs to the major facilitator superfamily. Sodium/anion cotransporter family. VGLUT subfamily.

Its subcellular location is the cytoplasmic vesicle. It is found in the secretory vesicle. The protein localises to the synaptic vesicle membrane. It localises to the cell membrane. The protein resides in the synapse. Its subcellular location is the synaptosome. The enzyme catalyses L-glutamate(out) = L-glutamate(in). It carries out the reaction chloride(in) = chloride(out). The catalysed reaction is 3 Na(+)(out) + phosphate(out) = 3 Na(+)(in) + phosphate(in). It catalyses the reaction phosphate(in) = phosphate(out). The enzyme catalyses K(+)(in) + H(+)(out) = K(+)(out) + H(+)(in). With respect to regulation, chloride channel activity is allosterically activated by lumenal H(+) and Cl(-) leading to synaptic vesicles acidification. The L-glutamate transport activity is allosterically activated by lumenal H(+) and Cl(-). The allosteric activation by H(+) efficiently prevents non-vesicular efflux across the plasma membrane, thereby restricting L-glutamate transport activity to acidic membranes such as synaptic vesicles. Functionally, multifunctional transporter that transports L-glutamate as well as multiple ions such as chloride, proton, potassium, sodium and phosphate. At the synaptic vesicle membrane, mainly functions as an uniporter which transports preferentially L-glutamate but also phosphate from the cytoplasm into synaptic vesicles at presynaptic nerve terminals of excitatory neural cells. The L-glutamate or phosphate uniporter activity is electrogenic and is driven by the proton electrochemical gradient, mainly by the electrical gradient established by the vacuolar H(+)-ATPase across the synaptic vesicle membrane. In addition, functions as a chloride channel that allows a chloride permeation through the synaptic vesicle membrane that affects the proton electrochemical gradient and promotes synaptic vesicles acidification. Moreover, may function as a K(+)/H(+) antiport allowing to maintain the electrical gradient and to decrease chemical gradient and therefore sustain vesicular glutamate uptake. The vesicular K(+)/H(+) antiport activity is electroneutral. At the plasma membrane, following exocytosis, functions as a symporter of Na(+) and phosphate from the extracellular space to the cytoplasm allowing synaptic phosphate homeostasis regulation. The symporter activity is driven by an inside negative membrane potential and is electrogenic. Is necessary for synaptic signaling of visual-evoked responses from photoreceptors. This Xenopus tropicalis (Western clawed frog) protein is Vesicular glutamate transporter 1.